Consider the following 711-residue polypeptide: Zinc finger CCCH domain-containing protein 32 (711 aa).

Low complexity predominate over residues 1-21 (MEADGAAAAAAAGEASTEAGA). Residues 1–23 (MEADGAAAAAAAGEASTEAGARP) are disordered. 3 C3H1-type zinc fingers span residues 31-60 (LRRN…HSDN), 62-88 (RMNP…HPPI), and 112-139 (GKQL…HGPQ). Disordered regions lie at residues 221-246 (KSEK…GDHP), 339-376 (RFNG…HSER), 405-561 (SSLA…EGPK), and 573-701 (AAWA…DDDD). Composition is skewed to basic and acidic residues over residues 364–376 (SERS…HSER) and 413–427 (RNGE…YRER). A compositionally biased stretch (basic residues) spans 428–437 (AHGHRSHRDH). Basic and acidic residues-rich tracts occupy residues 460-509 (SPDR…RRSS) and 585-594 (KQDKSAEVSH). Acidic residues-rich tracts occupy residues 648-663 (EDII…DADN) and 686-701 (ENAY…DDDD).

In Oryza sativa subsp. japonica (Rice), this protein is Zinc finger CCCH domain-containing protein 32.